A 300-amino-acid chain; its full sequence is N-acetylmuramic acid 6-phosphate etherase (300 aa).

Residues 57–220 form the SIS domain; the sequence is IAVAFQSGGR…TTGAMIRTGK (164 aa). The active-site Proton donor is Glu-85. Glu-116 is a catalytic residue.

The protein belongs to the GCKR-like family. MurNAc-6-P etherase subfamily. As to quaternary structure, homodimer.

It carries out the reaction N-acetyl-D-muramate 6-phosphate + H2O = N-acetyl-D-glucosamine 6-phosphate + (R)-lactate. It participates in amino-sugar metabolism; 1,6-anhydro-N-acetylmuramate degradation. The protein operates within amino-sugar metabolism; N-acetylmuramate degradation. It functions in the pathway cell wall biogenesis; peptidoglycan recycling. Its function is as follows. Specifically catalyzes the cleavage of the D-lactyl ether substituent of MurNAc 6-phosphate, producing GlcNAc 6-phosphate and D-lactate. Together with AnmK, is also required for the utilization of anhydro-N-acetylmuramic acid (anhMurNAc) either imported from the medium or derived from its own cell wall murein, and thus plays a role in cell wall recycling. In Aliivibrio fischeri (strain MJ11) (Vibrio fischeri), this protein is N-acetylmuramic acid 6-phosphate etherase.